Consider the following 306-residue polypeptide: Oxygen-dependent coproporphyrinogen-III oxidase (306 aa).

Residue Ser94 coordinates substrate. 2 residues coordinate a divalent metal cation: His98 and His108. The active-site Proton donor is the His108. 110–112 is a substrate binding site; that stretch reads NVR. A divalent metal cation is bound by residues His147 and His177. Residues 242–277 form an important for dimerization region; the sequence is YVEFNLVYDRGTLFGLQTGGRTESILMSMPPLVRWQ. 260–262 provides a ligand contact to substrate; the sequence is GGR.

The protein belongs to the aerobic coproporphyrinogen-III oxidase family. Homodimer. The cofactor is a divalent metal cation.

Its subcellular location is the cytoplasm. The enzyme catalyses coproporphyrinogen III + O2 + 2 H(+) = protoporphyrinogen IX + 2 CO2 + 2 H2O. It functions in the pathway porphyrin-containing compound metabolism; protoporphyrin-IX biosynthesis; protoporphyrinogen-IX from coproporphyrinogen-III (O2 route): step 1/1. Functionally, involved in the heme biosynthesis. Catalyzes the aerobic oxidative decarboxylation of propionate groups of rings A and B of coproporphyrinogen-III to yield the vinyl groups in protoporphyrinogen-IX. This Shewanella sediminis (strain HAW-EB3) protein is Oxygen-dependent coproporphyrinogen-III oxidase.